A 338-amino-acid chain; its full sequence is Nicotinate-nucleotide--dimethylbenzimidazole phosphoribosyltransferase (338 aa).

The Proton acceptor role is filled by glutamate 305.

The protein belongs to the CobT family. In terms of assembly, homodimer.

It carries out the reaction 5,6-dimethylbenzimidazole + nicotinate beta-D-ribonucleotide = alpha-ribazole 5'-phosphate + nicotinate + H(+). The protein operates within nucleoside biosynthesis; alpha-ribazole biosynthesis; alpha-ribazole from 5,6-dimethylbenzimidazole: step 1/2. In terms of biological role, catalyzes the synthesis of alpha-ribazole-5'-phosphate from nicotinate mononucleotide (NAMN) and 5,6-dimethylbenzimidazole (DMB). The protein is Nicotinate-nucleotide--dimethylbenzimidazole phosphoribosyltransferase (cobU) of Sinorhizobium sp.